Consider the following 151-residue polypeptide: Acidic phospholipase A2 5 (151 aa).

Residues 1 to 27 (MYPAHLLVLLAVCVSLLGAASIPARPL) form the signal peptide. 7 disulfides stabilise this stretch: Cys38–Cys104, Cys54–Cys151, Cys56–Cys72, Cys71–Cys132, Cys78–Cys125, Cys88–Cys118, and Cys111–Cys123. Positions 55, 57, and 59 each coordinate Ca(2+). The active site involves His75. Asp76 is a Ca(2+) binding site. Asp126 is an active-site residue.

The protein belongs to the phospholipase A2 family. Group I subfamily. D49 sub-subfamily. Ca(2+) serves as cofactor. As to expression, expressed by the venom gland.

Its subcellular location is the secreted. The catalysed reaction is a 1,2-diacyl-sn-glycero-3-phosphocholine + H2O = a 1-acyl-sn-glycero-3-phosphocholine + a fatty acid + H(+). Its function is as follows. PLA2 catalyzes the calcium-dependent hydrolysis of the 2-acyl groups in 3-sn-phosphoglycerides. The polypeptide is Acidic phospholipase A2 5 (Tropidechis carinatus (Australian rough-scaled snake)).